The chain runs to 857 residues: DNA mismatch repair protein MutS (857 aa).

Glycine 608–serine 615 is a binding site for ATP.

The protein belongs to the DNA mismatch repair MutS family.

This protein is involved in the repair of mismatches in DNA. It is possible that it carries out the mismatch recognition step. This protein has a weak ATPase activity. This is DNA mismatch repair protein MutS from Lacticaseibacillus paracasei (strain ATCC 334 / BCRC 17002 / CCUG 31169 / CIP 107868 / KCTC 3260 / NRRL B-441) (Lactobacillus paracasei).